The primary structure comprises 736 residues: Elongation factor 2 (736 aa).

Residues 18–261 (EQVRNIGITA…MVVKFIPNPR (244 aa)) enclose the tr-type G domain. GTP contacts are provided by residues 27–34 (AHVDHGKT), 93–97 (DTPGH), and 147–150 (NKVD). Histidine 602 carries the diphthamide modification.

This sequence belongs to the TRAFAC class translation factor GTPase superfamily. Classic translation factor GTPase family. EF-G/EF-2 subfamily.

The protein localises to the cytoplasm. Functionally, catalyzes the GTP-dependent ribosomal translocation step during translation elongation. During this step, the ribosome changes from the pre-translocational (PRE) to the post-translocational (POST) state as the newly formed A-site-bound peptidyl-tRNA and P-site-bound deacylated tRNA move to the P and E sites, respectively. Catalyzes the coordinated movement of the two tRNA molecules, the mRNA and conformational changes in the ribosome. The protein is Elongation factor 2 of Staphylothermus marinus (strain ATCC 43588 / DSM 3639 / JCM 9404 / F1).